The following is a 580-amino-acid chain: Zinc finger CCCH domain-containing protein 47 (580 aa).

ANK repeat units follow at residues Glu72–Arg102 and Glu107–Ser139. C3H1-type zinc fingers lie at residues Pro251–Phe278 and Gln286–Glu310. Residues Tyr421–His451 form a disordered region.

Expressed in roots and anthers.

The protein localises to the nucleus. Involved in salt stress response. May positively modulate plant tolerance to salt stress. This Arabidopsis thaliana (Mouse-ear cress) protein is Zinc finger CCCH domain-containing protein 47.